A 439-amino-acid polypeptide reads, in one-letter code: MRFQLFYILGLLSVTSLTQAANNLVCYYDSTSYLRQGLAKMHTNELDLALQFCTHLVYGYAGLKSGTLELFSLNVDLDMFYYKDITALRQKFPQLKILLSVGGDRDVDEAHPNKYVELLEANRTAQQNFIDSSMILLKRNGFDGLDLAFQLPRNKPRKVHGSLGTYWKSFKKLFTGDFVVDPLAEQHKSQFTDLVGNIKNAFRSANLMLSLTVLPNVNSTWYFDVPKLHPQFDYINLAAFDFLTPLRNPEEADYTAPIFFQDEQNRLPHLNVEFQVNYWLQNHCPGQKLNLGIASYGRAWKLSKESGLSGAPIVHETCGAAPGGIQIQSAEGLLSWPEICSKLSQNASAQYRGELAPLRKVTDLTQKYGNYALRPADENGDFGVWLSFDDPDFAGIKAVYAKSKGLGGIALFDLSYDDFRGLCTGQKYPIVRSIKYFMG.

The first 20 residues, 1-20 (MRFQLFYILGLLSVTSLTQA), serve as a signal peptide directing secretion. Residues 22-439 (NNLVCYYDST…IVRSIKYFMG (418 aa)) enclose the GH18 domain. Cysteine 26 and cysteine 53 are joined by a disulfide. N-linked (GlcNAc...) asparagine glycosylation is found at asparagine 122, asparagine 218, and asparagine 346. The cysteines at positions 340 and 423 are disulfide-linked.

The protein belongs to the glycosyl hydrolase 18 family. IDGF subfamily. In terms of processing, glycosylated.

It is found in the secreted. Its function is as follows. Cooperates with insulin-like peptides to stimulate the proliferation, polarization and motility of imaginal disk cells. May act by stabilizing the binding of insulin-like peptides to its receptor through a simultaneous interaction with both molecules to form a multiprotein signaling complex. This is Chitinase-like protein Idgf1 (Idgf1) from Drosophila simulans (Fruit fly).